A 324-amino-acid polypeptide reads, in one-letter code: Methionyl-tRNA formyltransferase (324 aa).

109-112 (SILP) lines the (6S)-5,6,7,8-tetrahydrofolate pocket.

This sequence belongs to the Fmt family.

It carries out the reaction L-methionyl-tRNA(fMet) + (6R)-10-formyltetrahydrofolate = N-formyl-L-methionyl-tRNA(fMet) + (6S)-5,6,7,8-tetrahydrofolate + H(+). Functionally, attaches a formyl group to the free amino group of methionyl-tRNA(fMet). The formyl group appears to play a dual role in the initiator identity of N-formylmethionyl-tRNA by promoting its recognition by IF2 and preventing the misappropriation of this tRNA by the elongation apparatus. This is Methionyl-tRNA formyltransferase from Acidothermus cellulolyticus (strain ATCC 43068 / DSM 8971 / 11B).